Here is a 519-residue protein sequence, read N- to C-terminus: Glucose-1-phosphate adenylyltransferase large subunit 3, chloroplastic/amyloplastic (519 aa).

The transit peptide at 1-74 (MQFSSVFPLE…DAGPDTLHVR (74 aa)) directs the protein to the chloroplast.

This sequence belongs to the bacterial/plant glucose-1-phosphate adenylyltransferase family. In terms of assembly, heterotetramer composed of two small and two large subunits. As to expression, expressed in stems.

It localises to the plastid. Its subcellular location is the chloroplast. It catalyses the reaction alpha-D-glucose 1-phosphate + ATP + H(+) = ADP-alpha-D-glucose + diphosphate. Its pathway is glycan biosynthesis; starch biosynthesis. Its activity is regulated as follows. Activated by 3'phosphoglycerate, inhibited by orthophosphate. Allosteric regulation. Its function is as follows. Involved in synthesis of starch. Catalyzes the synthesis of ADP-glucose, a molecule that serves as an activated glycosyl donor for alpha-1,4-glucan synthesis. Essential for starch synthesis in leaf chloroplasts. This is Glucose-1-phosphate adenylyltransferase large subunit 3, chloroplastic/amyloplastic from Oryza sativa subsp. japonica (Rice).